A 604-amino-acid polypeptide reads, in one-letter code: Sulfite reductase [NADPH] flavoprotein alpha-component (604 aa).

Residues 65–203 (VTILYGSQTG…AAGQWHADVL (139 aa)) enclose the Flavodoxin-like domain. Residues 71–76 (SQTGNG), 118–121 (STHG), and 154–163 (LGDSSYEFFC) each bind FMN. The FAD-binding FR-type domain maps to 236–453 (QNPYSAEVLV…VEPNKHFRLP (218 aa)). Residues Thr324, Leu358, 392–395 (RLYS), 410–412 (TVA), and 425–428 (GGAS) contribute to the FAD site. Residues 524–525 (SR), 530–534 (KIYVQ), and Asp566 each bind NADP(+). Tyr604 is a binding site for FAD.

It belongs to the NADPH-dependent sulphite reductase flavoprotein subunit CysJ family. In the N-terminal section; belongs to the flavodoxin family. This sequence in the C-terminal section; belongs to the flavoprotein pyridine nucleotide cytochrome reductase family. As to quaternary structure, alpha(8)-beta(8). The alpha component is a flavoprotein, the beta component is a hemoprotein. Requires FAD as cofactor. FMN serves as cofactor.

It carries out the reaction hydrogen sulfide + 3 NADP(+) + 3 H2O = sulfite + 3 NADPH + 4 H(+). It participates in sulfur metabolism; hydrogen sulfide biosynthesis; hydrogen sulfide from sulfite (NADPH route): step 1/1. In terms of biological role, component of the sulfite reductase complex that catalyzes the 6-electron reduction of sulfite to sulfide. This is one of several activities required for the biosynthesis of L-cysteine from sulfate. The flavoprotein component catalyzes the electron flow from NADPH -&gt; FAD -&gt; FMN to the hemoprotein component. This Shewanella sp. (strain MR-7) protein is Sulfite reductase [NADPH] flavoprotein alpha-component.